The sequence spans 158 residues: N5-carboxyaminoimidazole ribonucleotide mutase (158 aa).

Residues Ser10, Asp13, and Arg40 each contribute to the substrate site.

Belongs to the AIR carboxylase family. Class I subfamily.

The enzyme catalyses 5-carboxyamino-1-(5-phospho-D-ribosyl)imidazole + H(+) = 5-amino-1-(5-phospho-D-ribosyl)imidazole-4-carboxylate. It functions in the pathway purine metabolism; IMP biosynthesis via de novo pathway; 5-amino-1-(5-phospho-D-ribosyl)imidazole-4-carboxylate from 5-amino-1-(5-phospho-D-ribosyl)imidazole (N5-CAIR route): step 2/2. Catalyzes the conversion of N5-carboxyaminoimidazole ribonucleotide (N5-CAIR) to 4-carboxy-5-aminoimidazole ribonucleotide (CAIR). This is N5-carboxyaminoimidazole ribonucleotide mutase from Saccharolobus solfataricus (strain ATCC 35092 / DSM 1617 / JCM 11322 / P2) (Sulfolobus solfataricus).